Reading from the N-terminus, the 467-residue chain is Retinoic acid receptor RXR-gamma (467 aa).

Residues 1-142 (MYGNYPHFIK…TSPGSLAKHI (142 aa)) form a modulating region. NR C4-type zinc fingers lie at residues 143-163 (CAIC…CEGC) and 179-203 (CRDN…YQKC). The nuclear receptor DNA-binding region spans 143–208 (CAICGDRSSG…RYQKCLAMGM (66 aa)). The tract at residues 209–232 (KREAVQEERQGSRERSENEAESTS) is hinge. The segment covering 214–226 (QEERQGSRERSEN) has biased composition (basic and acidic residues). The disordered stretch occupies residues 214–237 (QEERQGSRERSENEAESTSGGSED). One can recognise an NR LBD domain in the interval 235-463 (SEDMPVERIL…TFLMEMLETP (229 aa)).

It belongs to the nuclear hormone receptor family. NR2 subfamily. In terms of assembly, homodimer. Heterodimer; with a RAR molecule. Binds DNA preferentially as a RAR/RXR heterodimer. As to expression, isoform 1 is highly expressed inliver. Isoform 2 is abundantly expressed in eye and dorsal root ganglia.

It is found in the nucleus. Receptor for retinoic acid. Retinoic acid receptors bind as heterodimers to their target response elements in response to their ligands, all-trans or 9-cis retinoic acid, and regulate gene expression in various biological processes. The RAR/RXR heterodimers bind to the retinoic acid response elements (RARE) composed of tandem 5'-AGGTCA-3' sites known as DR1-DR5. The high affinity ligand for RXRs is 9-cis retinoic acid. This is Retinoic acid receptor RXR-gamma (RXRG) from Gallus gallus (Chicken).